Here is a 334-residue protein sequence, read N- to C-terminus: Transcription initiation factor IIB (334 aa).

The TFIIB-type zinc-finger motif lies at 34 to 65; the sequence is TETVCPECGGRQLVHDYERAELVCQSCGLVID. Residues C38, C41, C57, and C60 each coordinate Zn(2+). 2 consecutive repeat copies span residues 151–234 and 245–326.

Belongs to the TFIIB family.

In terms of biological role, stabilizes TBP binding to an archaeal box-A promoter. Also responsible for recruiting RNA polymerase II to the pre-initiation complex (DNA-TBP-TFIIB). The sequence is that of Transcription initiation factor IIB from Methanoregula boonei (strain DSM 21154 / JCM 14090 / 6A8).